Consider the following 229-residue polypeptide: Cytidylate kinase (229 aa).

12–20 (GPSGSGKGT) is an ATP binding site.

Belongs to the cytidylate kinase family. Type 1 subfamily.

It localises to the cytoplasm. The enzyme catalyses CMP + ATP = CDP + ADP. It carries out the reaction dCMP + ATP = dCDP + ADP. The protein is Cytidylate kinase of Pseudomonas fluorescens (strain Pf0-1).